The primary structure comprises 256 residues: MDRSGYFPVLDEDIPTKSELRLPLESKTSSRSRRWLHLVLVLQFVLIISLLASLHILGNRQPSNITCAKQLSPYSPYLEDGDLELEEFTELNHLMQPSPYRGQPTPEIEEAWVRLWRVPMIGFPETKMINLNKTNPQDYAHVSTRYGDDMLGFLNVFHQLHCLNLVRQYTYRDDYDYSNVTAFRAPQELVRGHIDHCIETIRKSIMCASDVTPVVFQLDDSRKSGFKSDFNMRRTCRNFDKIQDWAVANAVQGDFE.

The helical transmembrane segment at 38 to 58 threads the bilayer; it reads LVLVLQFVLIISLLASLHILG. N-linked (GlcNAc...) asparagine glycans are attached at residues Asn-64 and Asn-132. The HXXHC 1 motif lies at 158–162; it reads HQLHC. The N-linked (GlcNAc...) asparagine glycan is linked to Asn-179. Positions 193–197 match the HXXHC 2 motif; the sequence is HIDHC.

It belongs to the ustYa family.

The protein localises to the membrane. It functions in the pathway mycotoxin biosynthesis. Its function is as follows. UstYa family oxidase; part of the gene cluster that mediates the biosynthesis of the phomopsins, a group of hexapeptide mycotoxins which infects lupins and causes lupinosis disease in livestock. Within the pathway, phomYc catalyzes the desaturation of the Ile moiety into 2,3-dehydroisoleucine (dIle). The pathway starts with the processing of the precursor phomA by several endopeptidases including kexin proteases as well as the cluster-specific S41 family peptidase phomP1 and the oligopeptidase phomG to produce 10 identical copies of the hexapeptide Tyr-Val-Ile-Pro-Ile-Asp. After being excised from the precursor peptide, the core peptides are cyclized and modified post-translationally by enzymes encoded within the gene cluster. The timing and order of proteolysis of the phomA precursor and PTMs are still unknown. Two tyrosinase-like enzymes, phomQ1 and phomQ2, catalyze the chlorination and hydroxylation of Tyr, respectively. PhomYb, is proposed to be involved in the construction of the macrocyclic structure. The other 4 ustYa family proteins may be involved in PTMs that generate the unique structure of phomopsin A. PhomYa is required for the hydroxylation of C-beta of Tyr. PhomYc, phomYd, and phomYe are responsible for the biosynthesis of 2,3-dehydroisoleucine (dIle), 2,3-dehydroaspartic acid (dAsp), and 3,4-dehydroproline (dPro), respectively. While dIle formation by phomYc is indispensable for the installation of dAsp by phomYd, the order of the other PTMs have not been elucidated yet. Most of the biosynthetic enzymes likely have broad substrate specificity, and thus, there might be a metabolic grid from a precursor to phomopsin A. The enzyme(s) responsible for the biosynthesis of 3,4-dehydrovaline (dVal) have also not been identified yet. Finally, phomM acts as an S-adenosylmethionine-dependent alpha-N-methyltransferase that catalyzes two successive N-methylation reactions, converting N-desmethyl-phomopsin A to phomopsin A and phomopsin A further to an N,N-dimethylated congener called phomopsin E. This is UstYa family oxidase phomYc from Diaporthe leptostromiformis (Lupinosis disease fungus).